A 327-amino-acid polypeptide reads, in one-letter code: S-adenosylmethionine/S-adenosylhomocysteine transporter (327 aa).

The next 10 helical transmembrane spans lie at 22–42 (CDMAIFLIFLNAFIWSSSFAL), 53–73 (LFVTGSRMVLAGVVLFGLLLC), 85–105 (IMPIVLLSVIGFYLTNVLEFI), 114–134 (TACFIYGFSPFTAAFCSYVQL), 143–163 (LGGLSLGLVSYLVYLLFGGSE), 165–185 (VAEWGWQLGLPELLLIAATCL), 202–222 (SLSMTAINAYAMVIAGVLSLI), 240–260 (LFLQAIGALVIFSNLICYNLF), 271–291 (FLSFCNLVMPLFASFFGWLLL), and 294–314 (SFPPGLLFAVGFMVLGCRLIY). The region spanning 34 to 157 (FIWSSSFALS…LGLVSYLVYL (124 aa)) is the EamA 1 domain. The EamA 2 domain maps to 189–313 (GWTLLRKLGR…GFMVLGCRLI (125 aa)).

It belongs to the drug/metabolite transporter (DMT) superfamily. 10 TMS drug/metabolite exporter (DME) (TC 2.A.7.3) family.

The protein resides in the cell membrane. With respect to regulation, CCCP treatment reduces SAM intracellular uptake by 50%. Its function is as follows. Transports S-adenosylmethionine (SAM) and S-adenosylhomocysteine (SAH). Allows bacteria to acquire SAM from the eukaryotic host cell and to likely remove the toxic by-product SAH. This Chlamydia trachomatis serovar L2 (strain ATCC VR-902B / DSM 19102 / 434/Bu) protein is S-adenosylmethionine/S-adenosylhomocysteine transporter.